The chain runs to 256 residues: MSPSVLEIRGLRIETQAGVLVHDVDLQLRRGEVCTLVGASGSGKSLSCLGLLDLLPPGLARTQGQLLLDGQPLAASSVRGRLTSLVLQNPRSAFNPVRNMASHAIETLRQRGITSAVARARMAHCLDAVGLADTERVLQSFAFQLSGGMLQRMMIALALMAETPFLLADEPTSDLDALSQARFLDLLMELVQVHGLGVLLVTHDMGVVARCADQVAVMEAGRIVECQPAHELFQRPASATARTLLHAHQVLCRSQP.

An ABC transporter domain is found at 6–245; that stretch reads LEIRGLRIET…PASATARTLL (240 aa). 38–45 lines the ATP pocket; the sequence is GASGSGKS.

The protein belongs to the ABC transporter superfamily. Nickel importer (TC 3.A.1.5.3) family. In terms of assembly, the complex is composed of two ATP-binding proteins (NikD and NikE), two transmembrane proteins (NikB and NikC) and a solute-binding protein (NikA).

Its subcellular location is the cell inner membrane. The enzyme catalyses Ni(2+)(out) + ATP + H2O = Ni(2+)(in) + ADP + phosphate + H(+). Part of the ABC transporter complex NikABCDE involved in nickel import. Responsible for energy coupling to the transport system. This is Nickel import ATP-binding protein NikD from Pseudomonas putida (strain ATCC 47054 / DSM 6125 / CFBP 8728 / NCIMB 11950 / KT2440).